A 673-amino-acid polypeptide reads, in one-letter code: Xaa-Pro aminopeptidase 2 (673 aa).

Residues 1–21 form the signal peptide; the sequence is MAQACWGCYPWLVLICACAWG. Asparagine 34, asparagine 48, and asparagine 64 each carry an N-linked (GlcNAc...) asparagine glycan. Residue arginine 115 coordinates substrate. N-linked (GlcNAc...) asparagine glycans are attached at residues asparagine 277, asparagine 290, and asparagine 294. Residue histidine 429 coordinates substrate. Aspartate 449 is a Mn(2+) binding site. 3 residues coordinate Zn(2+): aspartate 449, aspartate 460, and histidine 523. Residues histidine 523, histidine 532, and glutamate 554 each contribute to the substrate site. Zn(2+) contacts are provided by glutamate 554 and glutamate 568. A lipid anchor (GPI-anchor amidated alanine) is attached at alanine 649. Positions 650-673 are cleaved as a propeptide — removed in mature form; sequence RAAPTTSLGSLMTVSALAILGWSV.

Belongs to the peptidase M24B family. Homotrimer. The cofactor is Zn(2+). In terms of processing, N-glycosylated. As to expression, kidney.

The protein localises to the cell membrane. The enzyme catalyses Release of any N-terminal amino acid, including proline, that is linked to proline, even from a dipeptide or tripeptide.. Inhibited by apstatin and the metal ion chelator EDTA. Potently inhibited by the converting enzyme inhibitors cilazaprilat; enalaprilat; L155,212; ramiprilat and YS 980. Also inhibited to a lesser extent by indolaprilat; quinaprilat; spiraprilat; captopril and zofenoprilat. In terms of biological role, membrane-bound metalloprotease which catalyzes the removal of a penultimate prolyl residue from the N-termini of peptides, such as Arg-Pro-Pro. May play a role in the metabolism of the vasodilator bradykinin. The protein is Xaa-Pro aminopeptidase 2 (XPNPEP2) of Sus scrofa (Pig).